An 85-amino-acid chain; its full sequence is Transcriptional repressor protein KorC (85 aa).

A DNA-binding region (H-T-H motif) is located at residues 28–47 (VLHLAGLTGGQAARILGLGA).

Acts with KorA as corepressor in the control of the kilC and kilE operons. The sequence is that of Transcriptional repressor protein KorC (korC) from Escherichia coli.